Consider the following 208-residue polypeptide: Guanylate kinase (208 aa).

A Guanylate kinase-like domain is found at 4–181; it reads GLLIVISGPS…AVEKIQSIIS (178 aa). An ATP-binding site is contributed by 11 to 18; the sequence is GPSGTGKG.

This sequence belongs to the guanylate kinase family.

The protein localises to the cytoplasm. It catalyses the reaction GMP + ATP = GDP + ADP. Functionally, essential for recycling GMP and indirectly, cGMP. The protein is Guanylate kinase of Clostridium tetani (strain Massachusetts / E88).